The following is a 254-amino-acid chain: Pimeloyl-[acyl-carrier protein] methyl ester esterase (254 aa).

The region spanning 14 to 238 (VVMLHGWGLH…QASHAPFLSH (225 aa)) is the AB hydrolase-1 domain. Substrate-binding positions include W20, 80–81 (SL), and 142–146 (FLALQ). S80 serves as the catalytic Nucleophile. Active-site residues include D204 and H232. Position 232 (H232) interacts with substrate.

Belongs to the AB hydrolase superfamily. Carboxylesterase BioH family. In terms of assembly, monomer.

It is found in the cytoplasm. The enzyme catalyses 6-carboxyhexanoyl-[ACP] methyl ester + H2O = 6-carboxyhexanoyl-[ACP] + methanol + H(+). The protein operates within cofactor biosynthesis; biotin biosynthesis. Functionally, the physiological role of BioH is to remove the methyl group introduced by BioC when the pimeloyl moiety is complete. It allows to synthesize pimeloyl-ACP via the fatty acid synthetic pathway through the hydrolysis of the ester bonds of pimeloyl-ACP esters. The chain is Pimeloyl-[acyl-carrier protein] methyl ester esterase from Chromobacterium violaceum (strain ATCC 12472 / DSM 30191 / JCM 1249 / CCUG 213 / NBRC 12614 / NCIMB 9131 / NCTC 9757 / MK).